Here is a 317-residue protein sequence, read N- to C-terminus: Lipoyl synthase (317 aa).

[4Fe-4S] cluster-binding residues include Cys56, Cys61, Cys67, Cys82, Cys86, Cys89, and Ser298. The Radical SAM core domain occupies 68 to 287; the sequence is WEDREATFLI…KEEAEQIGFS (220 aa).

It belongs to the radical SAM superfamily. Lipoyl synthase family. [4Fe-4S] cluster serves as cofactor.

Its subcellular location is the cytoplasm. It carries out the reaction [[Fe-S] cluster scaffold protein carrying a second [4Fe-4S](2+) cluster] + N(6)-octanoyl-L-lysyl-[protein] + 2 oxidized [2Fe-2S]-[ferredoxin] + 2 S-adenosyl-L-methionine + 4 H(+) = [[Fe-S] cluster scaffold protein] + N(6)-[(R)-dihydrolipoyl]-L-lysyl-[protein] + 4 Fe(3+) + 2 hydrogen sulfide + 2 5'-deoxyadenosine + 2 L-methionine + 2 reduced [2Fe-2S]-[ferredoxin]. The protein operates within protein modification; protein lipoylation via endogenous pathway; protein N(6)-(lipoyl)lysine from octanoyl-[acyl-carrier-protein]: step 2/2. Its function is as follows. Catalyzes the radical-mediated insertion of two sulfur atoms into the C-6 and C-8 positions of the octanoyl moiety bound to the lipoyl domains of lipoate-dependent enzymes, thereby converting the octanoylated domains into lipoylated derivatives. The chain is Lipoyl synthase from Streptomyces coelicolor (strain ATCC BAA-471 / A3(2) / M145).